A 378-amino-acid chain; its full sequence is Cytochrome b (378 aa).

A run of 4 helical transmembrane segments spans residues 34-54 (FGSL…FLAM), 78-99 (WLLR…YLHV), 114-134 (WLVG…GYVL), and 179-199 (FFTF…IHIL). Residues His84 and His98 each coordinate heme b. Positions 183 and 197 each coordinate heme b. His202 serves as a coordination point for a ubiquinone. 4 helical membrane-spanning segments follow: residues 227 to 247 (FKDI…VLIN), 289 to 309 (LGGV…PFYH), 321 to 341 (INQI…WIGA), and 348 to 368 (YVLV…FNPL).

This sequence belongs to the cytochrome b family. The main subunits of complex b-c1 are: cytochrome b, cytochrome c1 and the Rieske protein. The cofactor is heme b.

It is found in the mitochondrion inner membrane. Its function is as follows. Component of the ubiquinol-cytochrome c reductase complex (complex III or cytochrome b-c1 complex) that is part of the mitochondrial respiratory chain. The b-c1 complex mediates electron transfer from ubiquinol to cytochrome c. Contributes to the generation of a proton gradient across the mitochondrial membrane that is then used for ATP synthesis. The polypeptide is Cytochrome b (MT-CYB) (Cochliomyia hominivorax (Primary screw-worm)).